Consider the following 409-residue polypeptide: MDKLLERFLHYVSLDTQSKSGVRQVPSTEGQWKLLRLLKQQLEEMGLVNITLSEKGTLMATLPANVEGDIPAIGFISHVDTSPDFSGKNVNPQIVENYRGGDIALGIGDEVLSPVMFPVLHQLLGQTLITTDGKTLLGADDKAGVAEIMTALAVLKGNPIPHGEINVAFTPDEEVGKGAKHFDVEAFGAQWAYTVDGGGVGELEFENFNAASVNIKIVGNNVHPGTAKGVMVNALSLAARIHAEVPADEAPETTEGYEGFYHLASMKGTVDRAEMHYIIRDFDRKQFEARKRKMMEIAKKVGKGLHPDCYIELVIEDSYYNMREKVVEHPHILDIAQQAMRDCHITPEMKPIRGGTDGVQLSFMGLPCPNLFTGGYNYHGKHEFVTLEGMEKAVQVIVRIAELTAKRGQ.

Residue histidine 78 participates in Zn(2+) binding. Aspartate 80 is a catalytic residue. Residue aspartate 140 participates in Zn(2+) binding. Glutamate 173 (proton acceptor) is an active-site residue. 3 residues coordinate Zn(2+): glutamate 174, aspartate 196, and histidine 379.

The protein belongs to the peptidase M20B family. The cofactor is Zn(2+).

The protein localises to the cytoplasm. It catalyses the reaction Release of the N-terminal residue from a tripeptide.. Its function is as follows. Cleaves the N-terminal amino acid of tripeptides. This chain is Peptidase T, found in Salmonella paratyphi C (strain RKS4594).